The chain runs to 430 residues: L-lysine N6-monooxygenase MbtG (430 aa).

The first 21 residues, 1–21, serve as a signal peptide directing secretion; the sequence is MTATLAVIGAGPKAVAVAAKA.

It belongs to the lysine N(6)-hydroxylase/L-ornithine N(5)-oxygenase family. FAD serves as cofactor.

It carries out the reaction L-lysine + NADPH + O2 = N(6)-hydroxy-L-lysine + NADP(+) + H2O. Its pathway is siderophore biosynthesis; mycobactin biosynthesis. In terms of biological role, flavoprotein monooxygenase required for N-hydroxylation of the two acylated lysine residues during mycobactin assembly, thus producing the hydroxamate groups necessary for iron sequestration. Is also able, but less efficiently, to hydroxylate L-lysine (non acylated) in vitro. The chain is L-lysine N6-monooxygenase MbtG (mbtG) from Mycobacterium sp. (strain MCS).